The primary structure comprises 584 residues: uncharacterized protein (584 aa).

Polar residues predominate over residues 353–375 (NSEGQTNAETSLNGKGTVGNQWA). Disordered regions lie at residues 353 to 379 (NSEG…SPPE), 400 to 426 (LESK…VSSH), and 463 to 565 (SVDS…CNSG). Positions 502-511 (KANSPASSRL) are enriched in polar residues. The segment covering 516–535 (DSSHLSKHVNFDKNPDHSEA) has biased composition (basic and acidic residues).

This is an uncharacterized protein from Mus musculus (Mouse).